The following is a 149-amino-acid chain: Large ribosomal subunit protein uL30 (149 aa).

The protein belongs to the universal ribosomal protein uL30 family. In terms of assembly, part of the 50S ribosomal subunit.

The chain is Large ribosomal subunit protein uL30 from Methanopyrus kandleri (strain AV19 / DSM 6324 / JCM 9639 / NBRC 100938).